The primary structure comprises 438 residues: chitinase-like effector (438 aa).

Residues 1-23 (MFTPLSSVTALLALSSAFLGAQA) form the signal peptide. The GH18 domain maps to 54–437 (FIAKGYYTGW…DAIRSGAGLS (384 aa)). Position 416 (W416) interacts with chitin.

Belongs to the glycosyl hydrolase 18 family.

It localises to the secreted. In terms of biological role, catalytically impaired chitinase that binds efficiently to chitin, but not to chitosan, xylan, or cellulose. Despite the lack of chitinolytic activity, retains substrate binding specificity and acts as an effector to prevent chitin-triggered immunity by sequestering immunogenic chitin fragments. Does not function in the protection of fungal cell wall against plant hydrolytic enzymes. In Moniliophthora perniciosa (Witches'-broom disease fungus), this protein is chitinase-like effector.